A 61-amino-acid polypeptide reads, in one-letter code: Small ribosomal subunit protein uS14 (61 aa).

Residues Cys-24, Cys-27, Cys-40, and Cys-43 each coordinate Zn(2+).

Belongs to the universal ribosomal protein uS14 family. Zinc-binding uS14 subfamily. In terms of assembly, part of the 30S ribosomal subunit. Contacts proteins S3 and S10. It depends on Zn(2+) as a cofactor.

Functionally, binds 16S rRNA, required for the assembly of 30S particles and may also be responsible for determining the conformation of the 16S rRNA at the A site. This chain is Small ribosomal subunit protein uS14, found in Clostridium kluyveri (strain NBRC 12016).